Consider the following 255-residue polypeptide: tRNA pseudouridine synthase A (255 aa).

Aspartate 43 acts as the Nucleophile in catalysis. Residue tyrosine 94 coordinates substrate.

The protein belongs to the tRNA pseudouridine synthase TruA family.

It catalyses the reaction uridine(38/39/40) in tRNA = pseudouridine(38/39/40) in tRNA. Its function is as follows. Formation of pseudouridine at positions 38, 39 and 40 in the anticodon stem and loop of transfer RNAs. The sequence is that of tRNA pseudouridine synthase A from Pyrobaculum neutrophilum (strain DSM 2338 / JCM 9278 / NBRC 100436 / V24Sta) (Thermoproteus neutrophilus).